The chain runs to 321 residues: Thymidylate synthase (321 aa).

Residues 1–32 are disordered; it reads MVLTPTKDGPDQESMPLPADNGESPSKQQAPV. Phosphoserine is present on residues serine 24 and serine 26. Tyrosine 39 is modified (phosphotyrosine). Residues arginine 56 and 181 to 182 contribute to the dUMP site; that span reads RR. The Nucleophile role is filled by cysteine 201. Residue tyrosine 208 is modified to Phosphotyrosine. Serine 210 carries the post-translational modification Phosphoserine. DUMP contacts are provided by residues 223 to 226, asparagine 234, and 264 to 266; these read RSAD and HVY. Aspartate 226 lines the (6R)-5,10-methylene-5,6,7,8-tetrahydrofolate pocket. Residue alanine 320 coordinates (6R)-5,10-methylene-5,6,7,8-tetrahydrofolate.

Belongs to the thymidylate synthase family. As to quaternary structure, homodimer.

It carries out the reaction dUMP + (6R)-5,10-methylene-5,6,7,8-tetrahydrofolate = 7,8-dihydrofolate + dTMP. The protein operates within pyrimidine metabolism; dTTP biosynthesis. The polypeptide is Thymidylate synthase (Ts) (Drosophila melanogaster (Fruit fly)).